We begin with the raw amino-acid sequence, 175 residues long: uncharacterized protein (175 aa).

This sequence to yeast YER187w.

This is an uncharacterized protein from Saccharomyces cerevisiae (strain ATCC 204508 / S288c) (Baker's yeast).